The sequence spans 141 residues: MLLGTFNITLDAKNRISLPAKLRAFFEGSIVINRGFENCLEVRKPQDFQKYFEQFNSFPSTQKDTRTLKRLIFANANFVDVDTAGRVLIPNNLINDAKLDKEIVLIGQFDHLEIWDKKLYEDYLANSESLETVAERMKDVK.

2 SpoVT-AbrB domains span residues 5-47 and 76-119; these read TFNI…KPQD and ANFV…DKKL.

This sequence belongs to the MraZ family. As to quaternary structure, homooctamer. Forms a ring.

Its subcellular location is the cytoplasm. The protein localises to the nucleoid. This Mycoplasma pneumoniae (strain ATCC 29342 / M129 / Subtype 1) (Mycoplasmoides pneumoniae) protein is Transcriptional regulator MraZ.